We begin with the raw amino-acid sequence, 186 residues long: Ribosome-recycling factor (186 aa).

Belongs to the RRF family.

Its subcellular location is the cytoplasm. Its function is as follows. Responsible for the release of ribosomes from messenger RNA at the termination of protein biosynthesis. May increase the efficiency of translation by recycling ribosomes from one round of translation to another. The chain is Ribosome-recycling factor from Chlorobaculum tepidum (strain ATCC 49652 / DSM 12025 / NBRC 103806 / TLS) (Chlorobium tepidum).